Consider the following 70-residue polypeptide: Large ribosomal subunit protein bL31 (70 aa).

Positions 16, 18, 38, and 41 each coordinate Zn(2+).

This sequence belongs to the bacterial ribosomal protein bL31 family. Type A subfamily. As to quaternary structure, part of the 50S ribosomal subunit. Requires Zn(2+) as cofactor.

Binds the 23S rRNA. The protein is Large ribosomal subunit protein bL31 of Bifidobacterium longum (strain DJO10A).